We begin with the raw amino-acid sequence, 444 residues long: Transcription activator AFTR-2 (444 aa).

Residues 16–43 (CDFCTQSKLRCNKNKPSCRRCTLQQQPC) constitute a DNA-binding region (zn(2)-C6 fungal-type). Residues 49-88 (RRTGRPPKHPRKANDCQEANGQHGDQDPVTSTPGGSYQQQ) form a disordered region. Over residues 50-59 (RTGRPPKHPR) the composition is skewed to basic residues. Positions 76–88 (PVTSTPGGSYQQQ) are enriched in polar residues.

The protein resides in the nucleus. Transcription factor that regulates the expression of the gene clusters that mediate the biosynthesis of the host-selective toxins (HSTs) AF-toxins responsible for Alternaria black spot of strawberry disease by the strawberry pathotype. On cellular level, AF-toxins affect plasma membrane of susceptible cells and cause a sudden increase in loss of K(+) after a few minutes of toxin treatment. The sequence is that of Transcription activator AFTR-2 from Alternaria alternata (Alternaria rot fungus).